A 340-amino-acid polypeptide reads, in one-letter code: Phenylalanine--tRNA ligase alpha subunit (340 aa).

Glu-254 provides a ligand contact to Mg(2+).

The protein belongs to the class-II aminoacyl-tRNA synthetase family. Phe-tRNA synthetase alpha subunit type 1 subfamily. Tetramer of two alpha and two beta subunits. Requires Mg(2+) as cofactor.

Its subcellular location is the cytoplasm. The catalysed reaction is tRNA(Phe) + L-phenylalanine + ATP = L-phenylalanyl-tRNA(Phe) + AMP + diphosphate + H(+). The polypeptide is Phenylalanine--tRNA ligase alpha subunit (Caldicellulosiruptor bescii (strain ATCC BAA-1888 / DSM 6725 / KCTC 15123 / Z-1320) (Anaerocellum thermophilum)).